The chain runs to 708 residues: E3 ubiquitin-protein ligase Praja-2 (708 aa).

A compositionally biased stretch (basic and acidic residues) spans 1–10 (MSQYTEKEPA). 2 disordered regions span residues 1–30 (MSQY…GYQT) and 53–90 (ERSL…SSLP). S2 is modified (N-acetylserine). Over residues 74-90 (ENSSGSSPLDQVDSSLP) the composition is skewed to polar residues. S196 is subject to Phosphoserine. 3 disordered regions span residues 244–342 (GDTE…KQRS), 385–411 (TQRE…DNPF), and 425–495 (DEDS…QTSL). T246 is subject to Phosphothreonine. Residues 249-276 (VHQNSQEIQRSSQDEMVSTKQQNNTSQE) are compositionally biased toward polar residues. A phosphoserine mark is found at S253, S309, and S323. Residues 322–332 (ISSSQVDQETG) show a composition bias toward polar residues. A compositionally biased stretch (basic and acidic residues) spans 333-342 (FNRHEAKQRS). S342 carries the post-translational modification Phosphoserine; by PKA. At T389 the chain carries Phosphothreonine; by PKA. Phosphoserine is present on S432. Residues 467–483 (NEPELQSDSSGPEEENQ) show a composition bias toward acidic residues. The segment covering 484-493 (ELSLQEGEQT) has biased composition (polar residues). The segment at 531-708 (DGNNNLEDDS…PSNDSIAEAP (178 aa)) is interaction with PRKAR1A, PRKAR2A and PRKAR2B. The tract at residues 550–570 (WSLFDGFADGLGVAEAISYVD) is mediates interaction with TBC1D31. An RING-type; atypical zinc finger spans residues 634–675 (CPICCSEYIKDDIATELPCHHFFHKPCVSIWLQKSGTCPVCR). The disordered stretch occupies residues 685–708 (ASAAPSSEPDPDAPPSNDSIAEAP). The span at 699–708 (PSNDSIAEAP) shows a compositional bias: low complexity.

Binds ubiquitin-conjugating enzymes (E2s). In vitro, interacts with the ubiquitin-conjugating enzyme, UBE2D2. The phosphorylated form interacts with PRKAR1A, PRKAR2A and PRKAR2B. Binds the catalytic subunits of cAMP-dependent protein kinase. Interacts with MFHAS1. Interacts with TBC1D31; the interaction is direct and recruits PJA2 to centrosomes.

It localises to the cytoplasm. Its subcellular location is the cell membrane. The protein resides in the endoplasmic reticulum membrane. It is found in the golgi apparatus membrane. The protein localises to the synapse. It localises to the postsynaptic density. Its subcellular location is the cytoskeleton. The protein resides in the microtubule organizing center. It is found in the centrosome. The enzyme catalyses S-ubiquitinyl-[E2 ubiquitin-conjugating enzyme]-L-cysteine + [acceptor protein]-L-lysine = [E2 ubiquitin-conjugating enzyme]-L-cysteine + N(6)-ubiquitinyl-[acceptor protein]-L-lysine.. Its pathway is protein modification; protein ubiquitination. In terms of biological role, has E2-dependent E3 ubiquitin-protein ligase activity. Responsible for ubiquitination of cAMP-dependent protein kinase type I and type II-alpha/beta regulatory subunits and for targeting them for proteasomal degradation. Essential for PKA-mediated long-term memory processes. Through the ubiquitination of MFHAS1, positively regulates the TLR2 signaling pathway that leads to the activation of the downstream p38 and JNK MAP kinases and promotes the polarization of macrophages toward the pro-inflammatory M1 phenotype. Plays a role in ciliogenesis by ubiquitinating OFD1. The chain is E3 ubiquitin-protein ligase Praja-2 (PJA2) from Pongo abelii (Sumatran orangutan).